The primary structure comprises 383 residues: Acetylornithine deacetylase (383 aa).

Position 80 (His-80) interacts with Zn(2+). Residue Asp-82 is part of the active site. Asp-112 contributes to the Zn(2+) binding site. Glu-144 is a catalytic residue. Zn(2+) is bound by residues Glu-145, Glu-169, and His-355.

Belongs to the peptidase M20A family. ArgE subfamily. As to quaternary structure, homodimer. It depends on Zn(2+) as a cofactor. Co(2+) serves as cofactor. Requires glutathione as cofactor.

The protein resides in the cytoplasm. The enzyme catalyses N(2)-acetyl-L-ornithine + H2O = L-ornithine + acetate. It participates in amino-acid biosynthesis; L-arginine biosynthesis; L-ornithine from N(2)-acetyl-L-ornithine (linear): step 1/1. Functionally, catalyzes the hydrolysis of the amide bond of N(2)-acetylated L-amino acids. Cleaves the acetyl group from N-acetyl-L-ornithine to form L-ornithine, an intermediate in L-arginine biosynthesis pathway, and a branchpoint in the synthesis of polyamines. This chain is Acetylornithine deacetylase, found in Salmonella agona (strain SL483).